The chain runs to 202 residues: Superoxide dismutase [Mn], mitochondrial (202 aa).

A mitochondrion-targeting transit peptide spans 1–5; that stretch reads HGRGM. H31 contributes to the Mn(2+) binding site. Position 39 is a 3'-nitrotyrosine (Y39). At K49 the chain carries N6-acetyllysine; alternate. K49 carries the post-translational modification N6-succinyllysine; alternate. H79 contributes to the Mn(2+) binding site. K95 carries the post-translational modification N6-acetyllysine. N6-acetyllysine; alternate occurs at positions 103 and 111. 2 positions are modified to N6-succinyllysine; alternate: K103 and K111. Mn(2+) contacts are provided by D164 and H168. K183 is subject to N6-acetyllysine.

This sequence belongs to the iron/manganese superoxide dismutase family. Homotetramer. It depends on Mn(2+) as a cofactor. Nitrated under oxidative stress. Nitration coupled with oxidation inhibits the catalytic activity. Post-translationally, acetylation at Lys-122 decreases enzymatic activity. Deacetylated by SIRT3 upon exposure to ionizing radiations or after long fasting. In terms of processing, polyubiquitinated; leading to proteasomal degradation. Deubiquitinated by USP36 which increases protein stability.

The protein resides in the mitochondrion matrix. The enzyme catalyses 2 superoxide + 2 H(+) = H2O2 + O2. Destroys superoxide anion radicals which are normally produced within the cells and which are toxic to biological systems. The protein is Superoxide dismutase [Mn], mitochondrial (SOD2) of Oryctolagus cuniculus (Rabbit).